Reading from the N-terminus, the 308-residue chain is HPr kinase/phosphorylase (308 aa).

Active-site residues include His138 and Lys159. Gly153–Ser160 lines the ATP pocket. Mg(2+) is bound at residue Ser160. Asp177 acts as the Proton acceptor; for phosphorylation activity. Proton donor; for dephosphorylation activity in catalysis. Residues Leu201–Asp210 are important for the catalytic mechanism of both phosphorylation and dephosphorylation. Glu202 provides a ligand contact to Mg(2+). Residue Arg243 is part of the active site. The segment at Gln264 to Arg269 is important for the catalytic mechanism of dephosphorylation.

This sequence belongs to the HPrK/P family. As to quaternary structure, homohexamer. Mg(2+) is required as a cofactor.

It carries out the reaction [HPr protein]-L-serine + ATP = [HPr protein]-O-phospho-L-serine + ADP + H(+). The enzyme catalyses [HPr protein]-O-phospho-L-serine + phosphate + H(+) = [HPr protein]-L-serine + diphosphate. Catalyzes the ATP- as well as the pyrophosphate-dependent phosphorylation of a specific serine residue in HPr, a phosphocarrier protein of the phosphoenolpyruvate-dependent sugar phosphotransferase system (PTS). HprK/P also catalyzes the pyrophosphate-producing, inorganic phosphate-dependent dephosphorylation (phosphorolysis) of seryl-phosphorylated HPr (P-Ser-HPr). In Bordetella bronchiseptica (strain ATCC BAA-588 / NCTC 13252 / RB50) (Alcaligenes bronchisepticus), this protein is HPr kinase/phosphorylase.